A 196-amino-acid chain; its full sequence is Large ribosomal subunit protein eL15 (196 aa).

Disordered regions lie at residues 72–93 (SARK…TRIT) and 163–196 (GLTG…GKGK).

It belongs to the eukaryotic ribosomal protein eL15 family. In terms of assembly, part of the 50S ribosomal subunit. Interacts with protein L7Ae and weakly with L44e.

The sequence is that of Large ribosomal subunit protein eL15 (rpl15e) from Haloarcula marismortui (strain ATCC 43049 / DSM 3752 / JCM 8966 / VKM B-1809) (Halobacterium marismortui).